Consider the following 220-residue polypeptide: MDLAAHIDHTLLKPTATPEEVAKAAEEALEYGFYGLCIPPSYVAWVKARYPHAPFRLVTVVGFPLGYQEKEVKALEAALACARGADEVDMVLHLGRAKAGDLDYVEAEVRAVREAVPKAVLKVILETGYFSPEEIARLAEAAIRGGADFLKTSTGFGPRGASLEDVALLVRVAQGRAQVKAAGGIRDRETALRMLKAGASRLGTSSGVALVAGEGGTLGY.

Aspartate 89 acts as the Proton donor/acceptor in catalysis. The Schiff-base intermediate with acetaldehyde role is filled by lysine 151. Lysine 180 functions as the Proton donor/acceptor in the catalytic mechanism.

This sequence belongs to the DeoC/FbaB aldolase family. DeoC type 1 subfamily.

Its subcellular location is the cytoplasm. The catalysed reaction is 2-deoxy-D-ribose 5-phosphate = D-glyceraldehyde 3-phosphate + acetaldehyde. The protein operates within carbohydrate degradation; 2-deoxy-D-ribose 1-phosphate degradation; D-glyceraldehyde 3-phosphate and acetaldehyde from 2-deoxy-alpha-D-ribose 1-phosphate: step 2/2. Catalyzes a reversible aldol reaction between acetaldehyde and D-glyceraldehyde 3-phosphate to generate 2-deoxy-D-ribose 5-phosphate. The sequence is that of Deoxyribose-phosphate aldolase from Thermus thermophilus (strain ATCC BAA-163 / DSM 7039 / HB27).